The sequence spans 184 residues: Putative serine carboxypeptidase-like 52 (184 aa).

An N-terminal signal peptide occupies residues 1–22 (MRTFSPKLLLLLLLVLRHHAES). Residue Asn93 is glycosylated (N-linked (GlcNAc...) asparagine).

The protein belongs to the peptidase S10 family.

It is found in the secreted. In Arabidopsis thaliana (Mouse-ear cress), this protein is Putative serine carboxypeptidase-like 52 (SCPL52).